The primary structure comprises 290 residues: Glyceraldehyde-3-phosphate dehydrogenase (290 aa).

Asp-13 and Arg-58 together coordinate NAD(+). D-glyceraldehyde 3-phosphate is bound by residues 129–131 (SCT), Thr-160, 189–190 (TG), and Arg-212. Catalysis depends on Cys-130, which acts as the Nucleophile.

Belongs to the glyceraldehyde-3-phosphate dehydrogenase family. As to quaternary structure, homotetramer.

Its subcellular location is the cytoplasm. It catalyses the reaction D-glyceraldehyde 3-phosphate + phosphate + NAD(+) = (2R)-3-phospho-glyceroyl phosphate + NADH + H(+). Its pathway is carbohydrate degradation; glycolysis; pyruvate from D-glyceraldehyde 3-phosphate: step 1/5. The protein is Glyceraldehyde-3-phosphate dehydrogenase (GPD) of Lactarius deterrimus (False saffron milkcap).